Consider the following 323-residue polypeptide: Magnesium transporter NIPA1 (323 aa).

The Extracellular segment spans residues Met-1–Ala-21. A helical membrane pass occupies residues Val-22–Leu-42. Over Gln-43 to Asp-60 the chain is Cytoplasmic. A helical transmembrane segment spans residues Ile-61–Tyr-81. Position 82 (Thr-82) is a topological domain, extracellular. A helical membrane pass occupies residues Ala-83–Leu-103. Over Ala-104 to Lys-111 the chain is Cytoplasmic. Residues Leu-112–Ile-132 form a helical membrane-spanning segment. Topologically, residues His-133 to Pro-153 are extracellular. The helical transmembrane segment at Val-154–Ala-174 threads the bilayer. Over Pro-175–His-177 the chain is Cytoplasmic. Residues Gly-178–Pro-198 form a helical membrane-spanning segment. The Extracellular segment spans residues Ser-199–Gln-218. Residues Arg-219–Phe-239 traverse the membrane as a helical segment. Topologically, residues Arg-240–Val-253 are cytoplasmic. Residues Phe-254–Phe-274 traverse the membrane as a helical segment. Residues Arg-275–Asp-284 lie on the Extracellular side of the membrane. Residues Phe-285–Phe-305 traverse the membrane as a helical segment. The Cytoplasmic portion of the chain corresponds to Lys-306–Asp-323.

The protein belongs to the NIPA family. As to quaternary structure, homodimer. Widely expressed. Predominantly expressed in neuronal tissues. Brain, heart, kidney, liver and colon (at protein level).

The protein localises to the cell membrane. It is found in the early endosome. The catalysed reaction is Mg(2+)(in) = Mg(2+)(out). Functionally, acts as a Mg(2+) transporter. Can also transport other divalent cations such as Fe(2+), Sr(2+), Ba(2+), Zn(2+) and Co(2+) but to a much less extent than Mg(2+). This is Magnesium transporter NIPA1 (Nipa1) from Mus musculus (Mouse).